Consider the following 355-residue polypeptide: Ribosomal RNA large subunit methyltransferase M (355 aa).

Residues serine 183, 216-219, aspartate 235, aspartate 255, and aspartate 271 contribute to the S-adenosyl-L-methionine site; that span reads SPGG. Lysine 300 (proton acceptor) is an active-site residue.

Belongs to the class I-like SAM-binding methyltransferase superfamily. RNA methyltransferase RlmE family. RlmM subfamily. As to quaternary structure, monomer.

The protein localises to the cytoplasm. The enzyme catalyses cytidine(2498) in 23S rRNA + S-adenosyl-L-methionine = 2'-O-methylcytidine(2498) in 23S rRNA + S-adenosyl-L-homocysteine + H(+). In terms of biological role, catalyzes the 2'-O-methylation at nucleotide C2498 in 23S rRNA. The chain is Ribosomal RNA large subunit methyltransferase M from Pseudomonas putida (strain W619).